We begin with the raw amino-acid sequence, 396 residues long: Argininosuccinate synthase (396 aa).

An ATP-binding site is contributed by A9–S17. Y85 lines the L-citrulline pocket. G115 contacts ATP. L-aspartate is bound by residues T117, N121, and D122. Position 121 (N121) interacts with L-citrulline. Residues R125, S173, E258, and Y270 each coordinate L-citrulline.

Belongs to the argininosuccinate synthase family. Type 1 subfamily. As to quaternary structure, homotetramer.

It is found in the cytoplasm. It catalyses the reaction L-citrulline + L-aspartate + ATP = 2-(N(omega)-L-arginino)succinate + AMP + diphosphate + H(+). Its pathway is amino-acid biosynthesis; L-arginine biosynthesis; L-arginine from L-ornithine and carbamoyl phosphate: step 2/3. The polypeptide is Argininosuccinate synthase (Streptococcus mutans serotype c (strain ATCC 700610 / UA159)).